The following is a 2273-amino-acid chain: Acetyl-CoA carboxylase, mitochondrial (2273 aa).

The N-terminal 104 residues, 1–104 (KGKTITHGQS…RGNIHKHTRL (104 aa)), are a transit peptide targeting the mitochondrion. A Biotin carboxylation domain is found at 134 to 635 (VISKILIANN…STGWLDDLIL (502 aa)). The ATP-grasp domain occupies 292-484 (KTNFVSVPDD…LPATQLQIAM (193 aa)). 332-337 (GGGGKG) lines the ATP pocket. The active site involves R459. One can recognise a Biotinyl-binding domain in the interval 763–837 (LEAELNPTQV…EAGDVIAKLT (75 aa)). K804 is modified (N6-biotinyllysine). The CoA carboxyltransferase N-terminal domain maps to 1532–1867 (PYSVKDWLQP…KRDMSPPLLE (336 aa)). The tract at residues 1532–2187 (PYSVKDWLQP…EGQVIKRLQK (656 aa)) is carboxyltransferase. Residues R1776, K2080, and R2082 each coordinate CoA. The CoA carboxyltransferase C-terminal domain maps to 1871 to 2187 (RWDRDVDFKP…EGQVIKRLQK (317 aa)).

Requires biotin as cofactor.

Its subcellular location is the mitochondrion. The catalysed reaction is hydrogencarbonate + acetyl-CoA + ATP = malonyl-CoA + ADP + phosphate + H(+). It catalyses the reaction N(6)-biotinyl-L-lysyl-[protein] + hydrogencarbonate + ATP = N(6)-carboxybiotinyl-L-lysyl-[protein] + ADP + phosphate + H(+). It participates in lipid metabolism; malonyl-CoA biosynthesis; malonyl-CoA from acetyl-CoA: step 1/1. In terms of biological role, catalyzes the rate-limiting reaction in the mitochondrial fatty acid synthesis (FAS) type II pathway. Responsible for the production of the mitochondrial malonyl-CoA, used for the biosynthesis of the cofactor lipoic acid. This protein carries three functions: biotin carboxyl carrier protein, biotin carboxylase, and carboxyltransferase. This is Acetyl-CoA carboxylase, mitochondrial (HFA1) from Saccharomyces cerevisiae (strain JAY291) (Baker's yeast).